An 864-amino-acid polypeptide reads, in one-letter code: Leucine--tRNA ligase (864 aa).

The 'HIGH' region motif lies at P42 to H52. The 'KMSKS' region signature appears at K624 to S628. K627 lines the ATP pocket.

Belongs to the class-I aminoacyl-tRNA synthetase family.

It is found in the cytoplasm. It carries out the reaction tRNA(Leu) + L-leucine + ATP = L-leucyl-tRNA(Leu) + AMP + diphosphate. The protein is Leucine--tRNA ligase of Burkholderia pseudomallei (strain 1710b).